Here is a 1240-residue protein sequence, read N- to C-terminus: Cohesin subunit SA-3 (1240 aa).

Low complexity predominate over residues 1-25 (MPTLWSPSTQHHGSSSGSESSPLQK). The segment at 1–108 (MPTLWSPSTQ…VSSGNGKNES (108 aa)) is disordered. Residues 97-108 (RIVSSGNGKNES) show a composition bias toward polar residues. Residues 324 to 409 (FVHRYRDILP…NRFKDRMVSM (86 aa)) enclose the SCD domain. Disordered stretches follow at residues 1077–1154 (AEAS…PELI) and 1213–1240 (DKML…MEDF). Over residues 1115–1125 (GPTTPTLTSTA) the composition is skewed to polar residues. Over residues 1126-1141 (VKRKQSLRTVGKKQKG) the composition is skewed to basic residues. At Ser-1218 the chain carries Phosphoserine.

It belongs to the SCC3 family. Component of the meiosis-specific cohesin complex, which also contains the SMC1 (SMC1A or SMC1B) and SMC3 heterodimer. Such complex likely contains RAD21, or the meiosis-specific related protein REC8. Interacts with CCDC79/TERB1; recruiting cohesin to telomeres to develop structural rigidity. In terms of processing, phosphorylated. In terms of tissue distribution, testis specific.

The protein resides in the nucleus. Its subcellular location is the chromosome. It is found in the centromere. Functionally, meiosis specific component of cohesin complex. The cohesin complex is required for the cohesion of sister chromatids after DNA replication. The cohesin complex apparently forms a large proteinaceous ring within which sister chromatids can be trapped. At anaphase, the complex is cleaved and dissociates from chromatin, allowing sister chromatids to segregate. The meiosis-specific cohesin complex probably replaces mitosis specific cohesin complex when it dissociates from chromatin during prophase I. The polypeptide is Cohesin subunit SA-3 (Stag3) (Mus musculus (Mouse)).